The sequence spans 482 residues: Catalase (482 aa).

Over residues 1-11 the composition is skewed to polar residues; the sequence is MNAMTNKTLTT. A disordered region spans residues 1 to 21; that stretch reads MNAMTNKTLTTAAGAPVADNN. Residues H57 and N130 contribute to the active site. Position 340 (Y340) interacts with heme.

The protein belongs to the catalase family. In terms of assembly, homodimer. Heme is required as a cofactor.

It carries out the reaction 2 H2O2 = O2 + 2 H2O. Decomposes hydrogen peroxide into water and oxygen; serves to protect cells from the toxic effects of hydrogen peroxide. The chain is Catalase (katA) from Bordetella bronchiseptica (strain ATCC BAA-588 / NCTC 13252 / RB50) (Alcaligenes bronchisepticus).